Consider the following 453-residue polypeptide: Bifunctional protein GlmU (453 aa).

The interval methionine 1–lysine 225 is pyrophosphorylase. UDP-N-acetyl-alpha-D-glucosamine-binding positions include leucine 6–glycine 9, lysine 20, glutamine 71, glycine 76–threonine 77, tyrosine 98–aspartate 100, glycine 135, glutamate 150, asparagine 165, and asparagine 223. Aspartate 100 is a Mg(2+) binding site. Asparagine 223 serves as a coordination point for Mg(2+). Residues glutamine 226–alanine 246 are linker. Positions glycine 247–serine 453 are N-acetyltransferase. The UDP-N-acetyl-alpha-D-glucosamine site is built by arginine 329 and lysine 347. Catalysis depends on histidine 359, which acts as the Proton acceptor. Residues tyrosine 362 and asparagine 373 each contribute to the UDP-N-acetyl-alpha-D-glucosamine site. Residues alanine 376, asparagine 382 to tyrosine 383, serine 401, and alanine 419 each bind acetyl-CoA.

It in the N-terminal section; belongs to the N-acetylglucosamine-1-phosphate uridyltransferase family. The protein in the C-terminal section; belongs to the transferase hexapeptide repeat family. Homotrimer. Requires Mg(2+) as cofactor.

Its subcellular location is the cytoplasm. It catalyses the reaction alpha-D-glucosamine 1-phosphate + acetyl-CoA = N-acetyl-alpha-D-glucosamine 1-phosphate + CoA + H(+). The catalysed reaction is N-acetyl-alpha-D-glucosamine 1-phosphate + UTP + H(+) = UDP-N-acetyl-alpha-D-glucosamine + diphosphate. It functions in the pathway nucleotide-sugar biosynthesis; UDP-N-acetyl-alpha-D-glucosamine biosynthesis; N-acetyl-alpha-D-glucosamine 1-phosphate from alpha-D-glucosamine 6-phosphate (route II): step 2/2. It participates in nucleotide-sugar biosynthesis; UDP-N-acetyl-alpha-D-glucosamine biosynthesis; UDP-N-acetyl-alpha-D-glucosamine from N-acetyl-alpha-D-glucosamine 1-phosphate: step 1/1. Its pathway is bacterial outer membrane biogenesis; LPS lipid A biosynthesis. In terms of biological role, catalyzes the last two sequential reactions in the de novo biosynthetic pathway for UDP-N-acetylglucosamine (UDP-GlcNAc). The C-terminal domain catalyzes the transfer of acetyl group from acetyl coenzyme A to glucosamine-1-phosphate (GlcN-1-P) to produce N-acetylglucosamine-1-phosphate (GlcNAc-1-P), which is converted into UDP-GlcNAc by the transfer of uridine 5-monophosphate (from uridine 5-triphosphate), a reaction catalyzed by the N-terminal domain. This is Bifunctional protein GlmU from Paraburkholderia xenovorans (strain LB400).